The chain runs to 504 residues: MPRALSILVFPSFSLRYDSGAENGSCTMIKIARIAVTLGLLSSLGAQAYAAGLVVNDNDLRNDLAWLSDRGVIHLSLSTWPLSQEEISRALKKAKPSYSSEQVVLARINQRLSALKADFRVTGYTSTDKPGTPQGFGQTQPADNSLGLAFNNSGEWWDVHLQGNVEGGERISNGSRFNANGAYGAVKFWNQWLSFGQVPQWWGPGYEGSLIRGDAMRPMTGFLMQRAEQAAPETWWLRWVGPWQYQISASQMNQYTAVPHAKIIGGRFTFTPFQSLELGASRIMQWGGEGRPQSFSSFWDGFTGHDNTGTDNEPGNQLAGFDFKFKLEPTLGWPVSFYGQMVGEDESGYLPSANMFLGGIEGHHGWGKDAVNWYVEAHDTRTNMSRTNYSYTHHIYKDGYYQQGYPLGDAMGGDGQLFAGKVELITENNQRWSTRLAYAKVNPKDQSINKAFPHSDTLKGVQLGWSGDVYQSVRLNTSLWYTNANNSDSDDVGASAGIEIPFSL.

This is an uncharacterized protein from Klebsiella pneumoniae.